Consider the following 224-residue polypeptide: Metalloproteinase inhibitor 4 (224 aa).

The N-terminal stretch at 1–29 (MPGSPRPAPSWVLLLRLLALLRPPGLGEA) is a signal peptide. Cys30 provides a ligand contact to Zn(2+). 2 involved in metalloproteinase-binding regions span residues 30-33 (CSCA) and 99-100 (SS). 6 cysteine pairs are disulfide-bonded: Cys30/Cys102, Cys32/Cys131, Cys42/Cys156, Cys158/Cys205, Cys163/Cys168, and Cys176/Cys197. The NTR domain maps to 30 to 156 (CSCAPAHPQQ…SLNHHYHLNC (127 aa)).

The protein belongs to the protease inhibitor I35 (TIMP) family. As to expression, abundant in heart and present at low levels in many other tissues.

It localises to the secreted. Functionally, complexes with metalloproteinases (such as collagenases) and irreversibly inactivates them by binding to their catalytic zinc cofactor. Known to act on MMP-1, MMP-2, MMP-3, MMP-7 and MMP-9. The protein is Metalloproteinase inhibitor 4 (TIMP4) of Homo sapiens (Human).